Consider the following 398-residue polypeptide: tRNA-specific 2-thiouridylase MnmA (398 aa).

Residues 20 to 27 and Leu46 contribute to the ATP site; that span reads AMSGGVDS. The Nucleophile role is filled by Cys114. Cys114 and Cys210 are joined by a disulfide. Gly138 provides a ligand contact to ATP. The interval 160-162 is interaction with tRNA; the sequence is RDQ. Cys210 acts as the Cysteine persulfide intermediate in catalysis.

The protein belongs to the MnmA/TRMU family.

The protein localises to the cytoplasm. It carries out the reaction S-sulfanyl-L-cysteinyl-[protein] + uridine(34) in tRNA + AH2 + ATP = 2-thiouridine(34) in tRNA + L-cysteinyl-[protein] + A + AMP + diphosphate + H(+). Its function is as follows. Catalyzes the 2-thiolation of uridine at the wobble position (U34) of tRNA, leading to the formation of s(2)U34. This Brucella melitensis biotype 1 (strain ATCC 23456 / CCUG 17765 / NCTC 10094 / 16M) protein is tRNA-specific 2-thiouridylase MnmA.